The following is a 61-amino-acid chain: Small ribosomal subunit protein uS14 (61 aa).

Zn(2+)-binding residues include Cys-24, Cys-27, Cys-40, and Cys-43.

The protein belongs to the universal ribosomal protein uS14 family. Zinc-binding uS14 subfamily. In terms of assembly, part of the 30S ribosomal subunit. Contacts proteins S3 and S10. It depends on Zn(2+) as a cofactor.

In terms of biological role, binds 16S rRNA, required for the assembly of 30S particles and may also be responsible for determining the conformation of the 16S rRNA at the A site. The chain is Small ribosomal subunit protein uS14 from Nitratiruptor sp. (strain SB155-2).